Here is a 228-residue protein sequence, read N- to C-terminus: Ribonuclease 3 (228 aa).

The RNase III domain occupies 7-136 (LNKLKNEYNI…FNGALFLDQG (130 aa)). A Mg(2+)-binding site is contributed by glutamate 49. Aspartate 53 is an active-site residue. Residues aspartate 122 and glutamate 125 each contribute to the Mg(2+) site. Glutamate 125 is an active-site residue. In terms of domain architecture, DRBM spans 162–228 (DYKTDLQELL…AAKAALQKFE (67 aa)). Residues 207-228 (GEGHNKKAAEQQAAKAALQKFE) are disordered. Low complexity predominate over residues 216–228 (EQQAAKAALQKFE).

This sequence belongs to the ribonuclease III family. Homodimer. Mg(2+) serves as cofactor.

It is found in the cytoplasm. The catalysed reaction is Endonucleolytic cleavage to 5'-phosphomonoester.. Its function is as follows. Digests double-stranded RNA. Involved in the processing of primary rRNA transcript to yield the immediate precursors to the large and small rRNAs (23S and 16S). Processes some mRNAs, and tRNAs when they are encoded in the rRNA operon. Processes pre-crRNA and tracrRNA of type II CRISPR loci if present in the organism. The polypeptide is Ribonuclease 3 (Lactobacillus acidophilus (strain ATCC 700396 / NCK56 / N2 / NCFM)).